Reading from the N-terminus, the 207-residue chain is Small ribosomal subunit protein uS4 (207 aa).

A disordered region spans residues 31-54; it reads KCKLDTKPGQHGRTSGSRTSDYGN. A compositionally biased stretch (polar residues) spans 42–53; it reads GRTSGSRTSDYG. The S4 RNA-binding domain maps to 97–158; it reads SRLDNVVYRM…KAKKQARITE (62 aa).

Belongs to the universal ribosomal protein uS4 family. As to quaternary structure, part of the 30S ribosomal subunit. Contacts protein S5. The interaction surface between S4 and S5 is involved in control of translational fidelity.

Its function is as follows. One of the primary rRNA binding proteins, it binds directly to 16S rRNA where it nucleates assembly of the body of the 30S subunit. In terms of biological role, with S5 and S12 plays an important role in translational accuracy. In Polynucleobacter asymbioticus (strain DSM 18221 / CIP 109841 / QLW-P1DMWA-1) (Polynucleobacter necessarius subsp. asymbioticus), this protein is Small ribosomal subunit protein uS4.